A 238-amino-acid chain; its full sequence is Ribonuclease PH (238 aa).

Residues Arg86 and 124–126 each bind phosphate; that span reads GTR.

This sequence belongs to the RNase PH family. Homohexameric ring arranged as a trimer of dimers.

The enzyme catalyses tRNA(n+1) + phosphate = tRNA(n) + a ribonucleoside 5'-diphosphate. In terms of biological role, phosphorolytic 3'-5' exoribonuclease that plays an important role in tRNA 3'-end maturation. Removes nucleotide residues following the 3'-CCA terminus of tRNAs; can also add nucleotides to the ends of RNA molecules by using nucleoside diphosphates as substrates, but this may not be physiologically important. Probably plays a role in initiation of 16S rRNA degradation (leading to ribosome degradation) during starvation. This Haemophilus influenzae (strain 86-028NP) protein is Ribonuclease PH.